A 558-amino-acid chain; its full sequence is D-xylose-proton symporter-like 3, chloroplastic (558 aa).

Residues 1 to 31 constitute a chloroplast transit peptide; sequence MAFAVSVQSHFAIRALKRDHFKNPSPRTFCS. A run of 12 helical transmembrane segments spans residues 98–118, 146–166, 175–195, 197–217, 238–258, 264–284, 359–379, 400–420, 426–446, 449–469, 491–511, and 522–542; these read VILP…DIGA, LVVS…YGVA, LIIA…APDL, ILLV…HGAP, LFIV…IDVV, MYGF…SLPA, ALTI…PSVL, VSVI…AKVD, PLLI…SAYY, LGGF…CYQI, GISL…FAFS, and LFLL…LVVP.

This sequence belongs to the major facilitator superfamily. Sugar transporter (TC 2.A.1.1) family.

Its subcellular location is the plastid. The protein localises to the chloroplast membrane. The sequence is that of D-xylose-proton symporter-like 3, chloroplastic from Arabidopsis thaliana (Mouse-ear cress).